Consider the following 365-residue polypeptide: MWLRSHRQLCLAFLLVCVLSVIFFLHIHQDSFPHGLGLSILCPDRRLVTPPVAIFCLPGTAMGPNASSSCPQHPASLSGTWTVYPNGRFGNQMGQYATLLALAQLNGRRAFILPAMHAALAPVFRITLPVLAPEVDSRTPWRELQLHDWMSEEYADLRDPFLKLSGFPCSWTFFHHLREQIRREFTLHDHLREEAQSVLGQLRLGRTGDRPRTFVGVHVRRGDYLQVMPQRWKGVVGDSAYLRQAMDWFRARHEAPVFVVTSNGMEWCKENIDTSQGDVTFAGDGQEATPWKDFALLTQCNHTIMTIGTFGFWAAYLAGGDTVYLANFTLPDSEFLKIFKPEAAFLPEWVGINADLSPLWTLAKP.

At 1 to 8 (MWLRSHRQ) the chain is on the cytoplasmic side. A helical; Signal-anchor for type II membrane protein transmembrane segment spans residues 9–25 (LCLAFLLVCVLSVIFFL). Over 26–365 (HIHQDSFPHG…LSPLWTLAKP (340 aa)) the chain is Lumenal. Residues Asn65 and Asn327 are each glycosylated (N-linked (GlcNAc...) asparagine).

The protein belongs to the glycosyltransferase 11 family.

Its subcellular location is the golgi apparatus. It is found in the golgi stack membrane. It catalyses the reaction a beta-D-galactosyl-(1-&gt;4)-N-acetyl-beta-D-glucosaminyl derivative + GDP-beta-L-fucose = an alpha-L-Fuc-(1-&gt;2)-beta-D-Gal-(1-&gt;4)-beta-D-GlcNAc derivative + GDP + H(+). It carries out the reaction a ganglioside GA1 + GDP-beta-L-fucose = a ganglioside Fuc-GA1 + GDP + H(+). The catalysed reaction is a beta-D-Gal-(1-&gt;3)-beta-D-GlcNAc-(1-&gt;3)-beta-D-Gal-(1-&gt;4)-beta-D-Glc-(1&lt;-&gt;1')-Cer(d18:1(4E)) + GDP-beta-L-fucose = alpha-L-fucosyl-(1-&gt;2)- beta-D-galactosyl-(1-&gt;3)-N-acetyl-beta-D-glucosaminyl-(1-&gt;3)-beta-D-galactosyl-(1-&gt;4)-beta-D-glucosyl-(1&lt;-&gt;1')-N-acylsphing-4-enine + GDP + H(+). The enzyme catalyses a neolactoside nLc4Cer(d18:1(4E)) + GDP-beta-L-fucose = a neolactoside IV(2)-alpha-Fuc-nLc4Cer(d18:1(4E)) + GDP + H(+). It catalyses the reaction a ganglioside GM1 + GDP-beta-L-fucose = a ganglioside Fuc-GM1 + GDP + H(+). It carries out the reaction beta-D-galactosyl-(1-&gt;3)-N-acetyl-D-galactosamine + GDP-beta-L-fucose = alpha-L-fucosyl-(1-&gt;2)-beta-D-galactosyl-(1-&gt;3)-N-acetyl-D-galactosamine + GDP + H(+). The protein operates within protein modification; protein glycosylation. In terms of biological role, catalyzes the transfer of L-fucose, from a guanosine diphosphate-beta-L-fucose, to the terminal galactose residue of glycoconjugates through an alpha(1,2) linkage leading to H antigen synthesis that is an intermediate substrate in the synthesis of ABO blood group antigens. H antigen is essential for maturation of the glomerular layer of the main olfactory bulb, in cell migration and early cell-cell contacts during tumor associated angiogenesis. Preferentially fucosylates soluble lactose and to a lesser extent fucosylates glycolipids gangliosides GA1 and GM1a. This Homo sapiens (Human) protein is Galactoside alpha-(1,2)-fucosyltransferase 1.